Here is a 181-residue protein sequence, read N- to C-terminus: Small ribosomal subunit protein uS4 (181 aa).

The region spanning 108–177 is the S4 RNA-binding domain; sequence RRLQTMVYRQ…EGHPEIERIN (70 aa). Positions 161 to 181 are disordered; it reads GTSPLTSEGHPEIERINKKRR. A compositionally biased stretch (basic and acidic residues) spans 169–181; sequence GHPEIERINKKRR.

It belongs to the universal ribosomal protein uS4 family. Part of the 30S ribosomal subunit. Contacts protein S5. The interaction surface between S4 and S5 is involved in control of translational fidelity.

Its function is as follows. One of the primary rRNA binding proteins, it binds directly to 16S rRNA where it nucleates assembly of the body of the 30S subunit. In terms of biological role, with S5 and S12 plays an important role in translational accuracy. This chain is Small ribosomal subunit protein uS4, found in Methanosphaerula palustris (strain ATCC BAA-1556 / DSM 19958 / E1-9c).